The following is a 435-amino-acid chain: Casein kinase I homolog 2 (435 aa).

The Protein kinase domain occupies 12 to 282 (YRVGRKIGEG…FLQELFDDVL (271 aa)). Residues 18-26 (IGEGSFGVI) and Lys-41 contribute to the ATP site. Catalysis depends on Asp-131, which acts as the Proton acceptor. At Ser-361 the chain carries Phosphoserine.

This sequence belongs to the protein kinase superfamily. CK1 Ser/Thr protein kinase family. Casein kinase I subfamily.

It localises to the cytoplasm. It carries out the reaction L-seryl-[protein] + ATP = O-phospho-L-seryl-[protein] + ADP + H(+). The catalysed reaction is L-threonyl-[protein] + ATP = O-phospho-L-threonyl-[protein] + ADP + H(+). Functionally, casein kinases are operationally defined by their preferential utilization of acidic proteins such as caseins as substrates. May contribute to the regulation of morphology. The sequence is that of Casein kinase I homolog 2 (cki2) from Schizosaccharomyces pombe (strain 972 / ATCC 24843) (Fission yeast).